Here is a 462-residue protein sequence, read N- to C-terminus: Hydroxymethylglutaryl-CoA synthase (462 aa).

Catalysis depends on E86, which acts as the Proton donor/acceptor. The Acyl-thioester intermediate role is filled by C120. C120, T211, H261, K270, N338, and S372 together coordinate (3S)-3-hydroxy-3-methylglutaryl-CoA. H261 (proton donor/acceptor) is an active-site residue.

The protein belongs to the thiolase-like superfamily. HMG-CoA synthase family.

It catalyses the reaction acetoacetyl-CoA + acetyl-CoA + H2O = (3S)-3-hydroxy-3-methylglutaryl-CoA + CoA + H(+). The protein operates within siderophore biosynthesis. Its function is as follows. Hydroxymethylglutaryl-CoA synthase involved in the biosynthesis of siderophore ferrichrome A which is contributing to organismal virulence. The first step of ferrichrome A biosynthesis is performed by the HMG-CoA synthase hcs1 which catalyzes the generation of HMG-CoA and CoA using acetoacetyl-CoA and acetyl-CoA as substrates. The enoyl-CoA isomerase/hydratase fer4 then catalyzes the conversion of hcs1-produced HMG-CoA to methylglutaconyl-CoA. The acyltransferase fer5 then fuses the fer4-generated methylglutaconyl-CoA with sid1-generated hydroxyornithine to yield methylglutaconyl hydroxyornithine. Methylglutaconyl hydroxyornithine is then available for use by the NRPS fer3 to generate ferrichrome A. This is Hydroxymethylglutaryl-CoA synthase from Mycosarcoma maydis (Corn smut fungus).